We begin with the raw amino-acid sequence, 220 residues long: MHNLEQKTARIDTLCREARILPVITIDREADILPMADALAAGGLTALEITLRTAHGLTAIRRLSEERPHLRIGAGTVLDPRTFAAAEKAGASFVVTPGCTDELLRFALDSEVPLLPGVASASEIMLAYRHGYRRFKLFPAEVSGGPAALKAFSGPFPDIRFCPTGGVSLNNLADYLAVPNVMCVGGTWMLPKAVVDRGDWAQVERLSREALERFAEHRRH.

Glu48 (proton acceptor) is an active-site residue. The pyruvate site is built by Arg52, Thr76, and Lys136. The Schiff-base intermediate with substrate role is filled by Lys136.

It belongs to the KHG/KDPG aldolase family. As to quaternary structure, homotrimer.

It catalyses the reaction 2-dehydro-3-deoxy-6-phospho-D-gluconate = D-glyceraldehyde 3-phosphate + pyruvate. Its pathway is carbohydrate acid metabolism; 2-dehydro-3-deoxy-D-gluconate degradation; D-glyceraldehyde 3-phosphate and pyruvate from 2-dehydro-3-deoxy-D-gluconate: step 2/2. Its function is as follows. Involved in the degradation of glucose via the Entner-Doudoroff pathway. Catalyzes the reversible, stereospecific retro-aldol cleavage of 2-keto-3-deoxy-6-phosphogluconate (KDPG) to pyruvate and D-glyceraldehyde-3-phosphate. The chain is 2-dehydro-3-deoxy-phosphogluconate aldolase (eda) from Pseudomonas aeruginosa (strain ATCC 15692 / DSM 22644 / CIP 104116 / JCM 14847 / LMG 12228 / 1C / PRS 101 / PAO1).